We begin with the raw amino-acid sequence, 304 residues long: Acetylglutamate kinase (304 aa).

Substrate contacts are provided by residues 70–71 (GG), Arg-92, and Asn-196.

The protein belongs to the acetylglutamate kinase family. ArgB subfamily.

The protein resides in the cytoplasm. The catalysed reaction is N-acetyl-L-glutamate + ATP = N-acetyl-L-glutamyl 5-phosphate + ADP. The protein operates within amino-acid biosynthesis; L-arginine biosynthesis; N(2)-acetyl-L-ornithine from L-glutamate: step 2/4. Its function is as follows. Catalyzes the ATP-dependent phosphorylation of N-acetyl-L-glutamate. The protein is Acetylglutamate kinase of Methanococcoides burtonii (strain DSM 6242 / NBRC 107633 / OCM 468 / ACE-M).